Here is a 222-residue protein sequence, read N- to C-terminus: Eukaryotic translation initiation factor 3 subunit K (222 aa).

Residues 46–208 (YDLEANLAVL…KIKTKNITEK (163 aa)) form the PCI domain.

The protein belongs to the eIF-3 subunit K family. As to quaternary structure, component of the eukaryotic translation initiation factor 3 (eIF-3) complex. The eIF-3 complex interacts with pix.

The protein resides in the cytoplasm. Functionally, component of the eukaryotic translation initiation factor 3 (eIF-3) complex, which is involved in protein synthesis of a specialized repertoire of mRNAs and, together with other initiation factors, stimulates binding of mRNA and methionyl-tRNAi to the 40S ribosome. The eIF-3 complex specifically targets and initiates translation of a subset of mRNAs involved in cell proliferation. The polypeptide is Eukaryotic translation initiation factor 3 subunit K (Drosophila erecta (Fruit fly)).